A 141-amino-acid chain; its full sequence is Hemoglobin subunit alpha-A (141 aa).

The region spanning 1 to 141 is the Globin domain; that stretch reads VLSAADKNNV…VGTVLTAKYR (141 aa). Residue histidine 58 coordinates O2. A heme b-binding site is contributed by histidine 87.

This sequence belongs to the globin family. In terms of assembly, heterotetramer of two alpha chains and two beta chains. In terms of tissue distribution, red blood cells.

In terms of biological role, involved in oxygen transport from the lung to the various peripheral tissues. The polypeptide is Hemoglobin subunit alpha-A (HBAA) (Phasianus colchicus colchicus (Black-necked pheasant)).